The chain runs to 62 residues: Cytotoxin homolog (62 aa).

4 disulfide bridges follow: Cys-3–Cys-22, Cys-15–Cys-40, Cys-44–Cys-55, and Cys-56–Cys-61.

The protein belongs to the three-finger toxin family. Short-chain subfamily. Orphan group XV sub-subfamily. As to expression, expressed by the venom gland.

The protein resides in the secreted. It is found in the target cell membrane. Functionally, has low cytotoxic activity. The chain is Cytotoxin homolog from Naja kaouthia (Monocled cobra).